The primary structure comprises 709 residues: MTPIVKQFKYGQHTVTLETGAIARQATAAVMASMDDTTVFVTVVAKKEVNEGQDFFPLTVDYQERTYAAGRIPGGFFKREGRPSEGETLIARLIDRPVRPLFPEGFFNEIQVIATVVSVNPQISPDLVAMIGASAALSLSGVPFNGPIGAARVGFIDNQFVLNPTTSEQRLSRLDLVVAGTDKAVLMVESEADILTEEQMLAAVVFGHEQQQVVIENIKEFVKEAGKPRWDWVAPEPNTDLINKVKALAEARLGDAYRITEKQARYEQIDAIKADVIAQLTAEDETISSGKIVDIITALESQIVRSRIIAGEPRIDGRTVDTVRALDICTGVLPRTHGSALFTRGETQALAVATLGTERDAQIIDELTGEKSDRFLFHYNFPPYSVGETGRIGSPKRREIGHGRLAKRGVLAVMPTAEEFPYVVRVVSEITESNGSSSMASVCGASLALMDAGVPIKAAVAGIAMGLVKEEEKFVVLSDILGDEDHLGDMDFKVAGTREGVTALQMDIKIEGITPEIMRIALNQAKGARMHILGVMEQAIPAPRSEISDFAPRIHTMKIDPKKIKDVIGKGGATIRALTEETGTSIDIDDDGTVKIAATDNNAAKRVMERIEEIVAEVEVNAIYKGKVTRVVDFGAFVSILGGKEGLVHISQITDARVERVADYLSVGQDVQVKVVEIERQGRIRLTMKDLNGDATAREVVEEIQELAE.

Residues Asp-485 and Asp-491 each contribute to the Mg(2+) site. In terms of domain architecture, KH spans 552–611 (PRIHTMKIDPKKIKDVIGKGGATIRALTEETGTSIDIDDDGTVKIAATDNNAAKRVMERI). Positions 621-689 (NAIYKGKVTR…RQGRIRLTMK (69 aa)) constitute an S1 motif domain.

Belongs to the polyribonucleotide nucleotidyltransferase family. Component of the RNA degradosome, which is a multiprotein complex involved in RNA processing and mRNA degradation. Mg(2+) serves as cofactor.

It is found in the cytoplasm. The enzyme catalyses RNA(n+1) + phosphate = RNA(n) + a ribonucleoside 5'-diphosphate. Functionally, involved in mRNA degradation. Catalyzes the phosphorolysis of single-stranded polyribonucleotides processively in the 3'- to 5'-direction. The polypeptide is Polyribonucleotide nucleotidyltransferase (Glaesserella parasuis serovar 5 (strain SH0165) (Haemophilus parasuis)).